Here is a 292-residue protein sequence, read N- to C-terminus: 4-hydroxy-tetrahydrodipicolinate synthase (292 aa).

Position 45 (threonine 45) interacts with pyruvate. Residue tyrosine 133 is the Proton donor/acceptor of the active site. Lysine 161 acts as the Schiff-base intermediate with substrate in catalysis. A pyruvate-binding site is contributed by isoleucine 203.

It belongs to the DapA family. In terms of assembly, homodimer.

The protein localises to the cytoplasm. It catalyses the reaction L-aspartate 4-semialdehyde + pyruvate = (2S,4S)-4-hydroxy-2,3,4,5-tetrahydrodipicolinate + H2O + H(+). It participates in amino-acid biosynthesis; L-lysine biosynthesis via DAP pathway; (S)-tetrahydrodipicolinate from L-aspartate: step 3/4. Functionally, catalyzes the condensation of (S)-aspartate-beta-semialdehyde [(S)-ASA] and pyruvate to 4-hydroxy-tetrahydrodipicolinate (HTPA). This Pseudomonas aeruginosa (strain ATCC 15692 / DSM 22644 / CIP 104116 / JCM 14847 / LMG 12228 / 1C / PRS 101 / PAO1) protein is 4-hydroxy-tetrahydrodipicolinate synthase.